Reading from the N-terminus, the 274-residue chain is uncharacterized protein (274 aa).

This is an uncharacterized protein from Bacillus subtilis (strain 168).